The primary structure comprises 192 residues: Ciliary microtubule-associated protein 3 (192 aa).

In terms of assembly, interacts with proteins involved in ciliary transport, including ARL13B, CETN1, KIF3A, RAB6A, RAB8A, TUBB1 and TUBG1. Interacts with AURKA.

The protein localises to the cytoplasmic vesicle. It localises to the golgi apparatus. The protein resides in the trans-Golgi network. It is found in the cytoplasm. During primary cilia disassembly, involved in cilia disassembly. Required specifically to control cilia retraction as well as the liberation and duplication of the basal body/centrosome. May act by stimulating AURKA activity at the basal body in a cell cycle-dependent manner. The sequence is that of Ciliary microtubule-associated protein 3 (CIMAP3) from Bos taurus (Bovine).